We begin with the raw amino-acid sequence, 253 residues long: 5'-nucleotidase SurE (253 aa).

A divalent metal cation-binding residues include Asp-8, Asp-9, Ser-40, and Asn-93.

The protein belongs to the SurE nucleotidase family. Requires a divalent metal cation as cofactor.

Its subcellular location is the cytoplasm. It carries out the reaction a ribonucleoside 5'-phosphate + H2O = a ribonucleoside + phosphate. In terms of biological role, nucleotidase that shows phosphatase activity on nucleoside 5'-monophosphates. This Methylobacterium sp. (strain 4-46) protein is 5'-nucleotidase SurE.